A 70-amino-acid polypeptide reads, in one-letter code: Putative membrane protein insertion efficiency factor (70 aa).

Belongs to the UPF0161 family.

Its subcellular location is the cell inner membrane. Could be involved in insertion of integral membrane proteins into the membrane. This Methylobacillus flagellatus (strain ATCC 51484 / DSM 6875 / VKM B-1610 / KT) protein is Putative membrane protein insertion efficiency factor.